A 530-amino-acid chain; its full sequence is Dual specificity calcium/calmodulin-dependent 3',5'-cyclic nucleotide phosphodiesterase 1A (530 aa).

2 calmodulin-binding regions span residues 24 to 44 (TEKMWQRLKGILRCLVKQLEK) and 114 to 137 (EKPRFRSIVHVVQAGIFVERMYRK). The PDEase domain occupies 142 to 508 (VGLAYPEAVI…ERWKELAAQG (367 aa)). Histidine 219 (proton donor) is an active-site residue. Positions 223, 259, 260, and 366 each coordinate Zn(2+). Aspartate 260 lines the Mg(2+) pocket. Disordered regions lie at residues 450–471 (TKTPSYGASRRSNMKGTTNDGT) and 502–530 (KELAAQGEPDPHKNSDLVNAEEKHAETHS). The segment covering 451–471 (KTPSYGASRRSNMKGTTNDGT) has biased composition (polar residues). Positions 510–530 (PDPHKNSDLVNAEEKHAETHS) are enriched in basic and acidic residues.

Belongs to the cyclic nucleotide phosphodiesterase family. PDE1 subfamily. In terms of assembly, homodimer. Interacts with YWHAZ. Requires Zn(2+) as cofactor. Mg(2+) is required as a cofactor.

The enzyme catalyses a nucleoside 3',5'-cyclic phosphate + H2O = a nucleoside 5'-phosphate + H(+). It carries out the reaction 3',5'-cyclic GMP + H2O = GMP + H(+). The catalysed reaction is 3',5'-cyclic AMP + H2O = AMP + H(+). With respect to regulation, type I PDE are activated by the binding of calmodulin in the presence of Ca(2+). Calcium/calmodulin-dependent cyclic nucleotide phosphodiesterase with a dual specificity for the second messengers cGMP and cAMP, which are key regulators of many important physiological processes. Has a higher efficiency with cGMP compared to cAMP. This Bos taurus (Bovine) protein is Dual specificity calcium/calmodulin-dependent 3',5'-cyclic nucleotide phosphodiesterase 1A.